Reading from the N-terminus, the 266-residue chain is Energy-coupling factor transporter transmembrane protein EcfT (266 aa).

The next 5 membrane-spanning stretches (helical) occupy residues 32 to 52, 71 to 91, 107 to 127, 152 to 172, and 246 to 266; these read IIVV…AFTV, PLLW…PAGG, LINA…STLL, VPVD…PTLM, and DTVT…FRHW.

The protein belongs to the energy-coupling factor EcfT family. Forms a stable energy-coupling factor (ECF) transporter complex composed of 2 membrane-embedded substrate-binding proteins (S component), 2 ATP-binding proteins (A component) and 2 transmembrane proteins (T component). May be able to interact with more than 1 S component at a time.

It is found in the cell membrane. Transmembrane (T) component of an energy-coupling factor (ECF) ABC-transporter complex. Unlike classic ABC transporters this ECF transporter provides the energy necessary to transport a number of different substrates. In Levilactobacillus brevis (strain ATCC 367 / BCRC 12310 / CIP 105137 / JCM 1170 / LMG 11437 / NCIMB 947 / NCTC 947) (Lactobacillus brevis), this protein is Energy-coupling factor transporter transmembrane protein EcfT.